Consider the following 83-residue polypeptide: Large ribosomal subunit protein bL31 (83 aa).

The protein belongs to the bacterial ribosomal protein bL31 family. Type A subfamily. As to quaternary structure, part of the 50S ribosomal subunit.

In terms of biological role, binds the 23S rRNA. This is Large ribosomal subunit protein bL31 from Gloeothece citriformis (strain PCC 7424) (Cyanothece sp. (strain PCC 7424)).